The sequence spans 452 residues: Cell division protein FtsZ (452 aa).

Residues 24–28 (GAGSN), 111–113 (GTG), Glu-142, Arg-146, and Asp-190 contribute to the GTP site. The tract at residues 432–452 (DQDNKESDIHDIPAFLRKKRD) is disordered. Residues 433–442 (QDNKESDIHD) are compositionally biased toward basic and acidic residues.

It belongs to the FtsZ family. As to quaternary structure, homodimer. Polymerizes to form a dynamic ring structure in a strictly GTP-dependent manner. Interacts directly with several other division proteins.

The protein localises to the cytoplasm. Essential cell division protein that forms a contractile ring structure (Z ring) at the future cell division site. The regulation of the ring assembly controls the timing and the location of cell division. One of the functions of the FtsZ ring is to recruit other cell division proteins to the septum to produce a new cell wall between the dividing cells. Binds GTP and shows GTPase activity. The sequence is that of Cell division protein FtsZ from Rickettsia conorii (strain ATCC VR-613 / Malish 7).